The chain runs to 264 residues: Thymidylate synthase (264 aa).

DUMP is bound at residue arginine 21. Position 51 (histidine 51) interacts with (6R)-5,10-methylene-5,6,7,8-tetrahydrofolate. 126–127 contributes to the dUMP binding site; sequence RR. Cysteine 146 acts as the Nucleophile in catalysis. Residues 166–169, asparagine 177, and 207–209 contribute to the dUMP site; these read RSVD and HLY. Aspartate 169 lines the (6R)-5,10-methylene-5,6,7,8-tetrahydrofolate pocket. Alanine 263 provides a ligand contact to (6R)-5,10-methylene-5,6,7,8-tetrahydrofolate.

This sequence belongs to the thymidylate synthase family. Bacterial-type ThyA subfamily. Homodimer.

It localises to the cytoplasm. The catalysed reaction is dUMP + (6R)-5,10-methylene-5,6,7,8-tetrahydrofolate = 7,8-dihydrofolate + dTMP. It functions in the pathway pyrimidine metabolism; dTTP biosynthesis. Functionally, catalyzes the reductive methylation of 2'-deoxyuridine-5'-monophosphate (dUMP) to 2'-deoxythymidine-5'-monophosphate (dTMP) while utilizing 5,10-methylenetetrahydrofolate (mTHF) as the methyl donor and reductant in the reaction, yielding dihydrofolate (DHF) as a by-product. This enzymatic reaction provides an intracellular de novo source of dTMP, an essential precursor for DNA biosynthesis. This Geobacillus sp. (strain WCH70) protein is Thymidylate synthase.